A 526-amino-acid polypeptide reads, in one-letter code: Phosphoenolpyruvate carboxykinase (ATP) 2 (526 aa).

The substrate site is built by R55, Y190, and K196. ATP-binding positions include K196, H215, and 231 to 239 (GLSGTGKTT). The Mn(2+) site is built by K196 and H215. Residue D252 coordinates Mn(2+). Residues E280, R317, and T442 each contribute to the ATP site. Substrate is bound at residue R317.

Belongs to the phosphoenolpyruvate carboxykinase (ATP) family. The cofactor is Mn(2+).

The protein localises to the cytoplasm. It catalyses the reaction oxaloacetate + ATP = phosphoenolpyruvate + ADP + CO2. Its pathway is carbohydrate biosynthesis; gluconeogenesis. Functionally, involved in the gluconeogenesis. Catalyzes the conversion of oxaloacetate (OAA) to phosphoenolpyruvate (PEP) through direct phosphoryl transfer between the nucleoside triphosphate and OAA. The polypeptide is Phosphoenolpyruvate carboxykinase (ATP) 2 (Moorella thermoacetica (strain ATCC 39073 / JCM 9320)).